The following is a 487-amino-acid chain: NADH-quinone oxidoreductase subunit N (487 aa).

A run of 13 helical transmembrane segments spans residues 7–27, 37–57, 81–101, 112–132, 166–186, 207–227, 237–257, 276–296, 307–327, 329–349, 373–393, 407–427, and 452–472; these read LTLILPEIVMAISAMALILIT, LVSILAAATLGAAAVMVAPAL, FAKILIYLSAIGCLMIAPAFF, PVLVLLATLGMSIMVSAGDLI, FVLGALASGILLYGMSLVYGF, ALFGVIFVLAGLAFKIAAVPF, GAPTPVTTFFATAPKVAAVAL, IVIFAALASIVLGALGAIGQT, INNVGFILIGLAASTVAGLSA, LTYLAIYVVMALGSFVALLML, LAWCLLFLMFSLAGIPPLLGF, DMVLLAALGIAASVIGAFYYI, and VLLILAAVVVSPLGYLLTGWL.

It belongs to the complex I subunit 2 family. In terms of assembly, NDH-1 is composed of 14 different subunits. Subunits NuoA, H, J, K, L, M, N constitute the membrane sector of the complex.

It localises to the cell inner membrane. The enzyme catalyses a quinone + NADH + 5 H(+)(in) = a quinol + NAD(+) + 4 H(+)(out). In terms of biological role, NDH-1 shuttles electrons from NADH, via FMN and iron-sulfur (Fe-S) centers, to quinones in the respiratory chain. The immediate electron acceptor for the enzyme in this species is believed to be ubiquinone. Couples the redox reaction to proton translocation (for every two electrons transferred, four hydrogen ions are translocated across the cytoplasmic membrane), and thus conserves the redox energy in a proton gradient. The sequence is that of NADH-quinone oxidoreductase subunit N from Erythrobacter litoralis (strain HTCC2594).